The sequence spans 127 residues: Small ribosomal subunit protein bS6 (127 aa).

Belongs to the bacterial ribosomal protein bS6 family.

Functionally, binds together with bS18 to 16S ribosomal RNA. The polypeptide is Small ribosomal subunit protein bS6 (Buchnera aphidicola subsp. Cinara cedri (strain Cc)).